A 160-amino-acid polypeptide reads, in one-letter code: Cytochrome b6-f complex subunit 4 (160 aa).

3 helical membrane passes run 36–56 (LLYI…GLAV), 95–115 (LLGV…PFLE), and 131–151 (TVFL…TLPI).

This sequence belongs to the cytochrome b family. PetD subfamily. As to quaternary structure, the 4 large subunits of the cytochrome b6-f complex are cytochrome b6, subunit IV (17 kDa polypeptide, petD), cytochrome f and the Rieske protein, while the 4 small subunits are petG, petL, petM and petN. The complex functions as a dimer.

It is found in the plastid. It localises to the chloroplast thylakoid membrane. Functionally, component of the cytochrome b6-f complex, which mediates electron transfer between photosystem II (PSII) and photosystem I (PSI), cyclic electron flow around PSI, and state transitions. In Solanum tuberosum (Potato), this protein is Cytochrome b6-f complex subunit 4.